Consider the following 640-residue polypeptide: Endoglucanase 1 (640 aa).

Positions 1–24 (MARRGGAAASSSMANLLGVALVLA) are cleaved as a signal peptide. Asp94 functions as the Nucleophile in the catalytic mechanism. Active-site residues include His433, Asp485, and Glu494. 2 N-linked (GlcNAc...) asparagine glycosylation sites follow: Asn528 and Asn548.

The protein belongs to the glycosyl hydrolase 9 (cellulase E) family. As to expression, expressed in roots, leaf sheaths and flowers.

It localises to the secreted. The catalysed reaction is Endohydrolysis of (1-&gt;4)-beta-D-glucosidic linkages in cellulose, lichenin and cereal beta-D-glucans.. The chain is Endoglucanase 1 (GLU7) from Oryza sativa subsp. japonica (Rice).